Here is a 424-residue protein sequence, read N- to C-terminus: Proline--tRNA ligase (424 aa).

Belongs to the class-II aminoacyl-tRNA synthetase family. ProS type 2 subfamily. As to quaternary structure, homodimer.

The protein localises to the cytoplasm. The enzyme catalyses tRNA(Pro) + L-proline + ATP = L-prolyl-tRNA(Pro) + AMP + diphosphate. Catalyzes the attachment of proline to tRNA(Pro) in a two-step reaction: proline is first activated by ATP to form Pro-AMP and then transferred to the acceptor end of tRNA(Pro). The protein is Proline--tRNA ligase of Ehrlichia canis (strain Jake).